The following is a 188-amino-acid chain: Ribosome-recycling factor (188 aa).

It belongs to the RRF family.

The protein localises to the cytoplasm. In terms of biological role, responsible for the release of ribosomes from messenger RNA at the termination of protein biosynthesis. May increase the efficiency of translation by recycling ribosomes from one round of translation to another. This is Ribosome-recycling factor from Phenylobacterium zucineum (strain HLK1).